A 90-amino-acid chain; its full sequence is Acylphosphatase (90 aa).

One can recognise an Acylphosphatase-like domain in the interval 5–90 (CEKFVVSGIV…CREYQGFEIL (86 aa)). Catalysis depends on residues Arg-20 and Asn-38.

It belongs to the acylphosphatase family.

It carries out the reaction an acyl phosphate + H2O = a carboxylate + phosphate + H(+). This is Acylphosphatase (acyP) from Vibrio vulnificus (strain CMCP6).